The chain runs to 626 residues: Chaperone protein HtpG (626 aa).

Residues 1–339 are a; substrate-binding; that stretch reads MSTNQETRGF…SNDLPLNVSR (339 aa). Positions 340–555 are b; sequence EILQDNKVTA…NDQMTTQMAK (216 aa). Positions 556 to 626 are c; sequence LFAAAGQPVP…FIKRVNNLLG (71 aa).

The protein belongs to the heat shock protein 90 family. Homodimer.

The protein resides in the cytoplasm. In terms of biological role, molecular chaperone. Has ATPase activity. In Histophilus somni (strain 2336) (Haemophilus somnus), this protein is Chaperone protein HtpG.